We begin with the raw amino-acid sequence, 182 residues long: MFKYIGDIVKGTGTQLRSLAMVFSHGFRKRDTLQYPEEPVYLPPRYRGRIVLTRDPDGEERCVACNLCAVACPVGCISLQKAETEDGRWYPEFFRINFSRCIFCGLCEEACPTTAIQLTPDFEMAEFKRQDLVYEKEDLLISGPGKNPDYNFYRVAGMAIAGKPKGSAQNEAEPINVKSLLP.

4Fe-4S ferredoxin-type domains follow at residues 52–82 (LTRD…LQKA) and 92–121 (EFFR…LTPD). The [4Fe-4S] cluster site is built by Cys-62, Cys-65, Cys-68, Cys-72, Cys-101, Cys-104, Cys-107, and Cys-111.

The protein belongs to the complex I 23 kDa subunit family. In terms of assembly, NDH-1 is composed of 13 different subunits. Subunits NuoA, H, J, K, L, M, N constitute the membrane sector of the complex. The cofactor is [4Fe-4S] cluster.

The protein resides in the cell inner membrane. The catalysed reaction is a quinone + NADH + 5 H(+)(in) = a quinol + NAD(+) + 4 H(+)(out). Its function is as follows. NDH-1 shuttles electrons from NADH, via FMN and iron-sulfur (Fe-S) centers, to quinones in the respiratory chain. The immediate electron acceptor for the enzyme in this species is believed to be ubiquinone. Couples the redox reaction to proton translocation (for every two electrons transferred, four hydrogen ions are translocated across the cytoplasmic membrane), and thus conserves the redox energy in a proton gradient. The chain is NADH-quinone oxidoreductase subunit I from Pseudomonas putida (strain ATCC 47054 / DSM 6125 / CFBP 8728 / NCIMB 11950 / KT2440).